Reading from the N-terminus, the 74-residue chain is ATP synthase subunit 9, mitochondrial (74 aa).

2 helical membrane-spanning segments follow: residues 16-36 and 50-70; these read GLIGAGIGIGVVFGSLIIGVS and ILGFAFSEATGLFALMMAFLL.

This sequence belongs to the ATPase C chain family. In terms of assembly, F-type ATPases have 2 components, CF(1) - the catalytic core - and CF(0) - the membrane proton channel. CF(1) has five subunits: alpha(3), beta(3), gamma(1), delta(1), epsilon(1). CF(0) has three main subunits: a, b and c.

It localises to the mitochondrion inner membrane. Mitochondrial membrane ATP synthase (F(1)F(0) ATP synthase or Complex V) produces ATP from ADP in the presence of a proton gradient across the membrane which is generated by electron transport complexes of the respiratory chain. F-type ATPases consist of two structural domains, F(1) - containing the extramembraneous catalytic core and F(0) - containing the membrane proton channel, linked together by a central stalk and a peripheral stalk. During catalysis, ATP synthesis in the catalytic domain of F(1) is coupled via a rotary mechanism of the central stalk subunits to proton translocation. Part of the complex F(0) domain. A homomeric c-ring of probably 10 subunits is part of the complex rotary element. The protein is ATP synthase subunit 9, mitochondrial (atp-9) of Neurospora crassa (strain ATCC 24698 / 74-OR23-1A / CBS 708.71 / DSM 1257 / FGSC 987).